We begin with the raw amino-acid sequence, 121 residues long: Non-specific lipid-transfer protein 9 (121 aa).

The signal sequence occupies residues 1 to 27 (MRKSISIAFVIAITIFMSHLNVFTVYS). 4 disulfides stabilise this stretch: cysteine 31/cysteine 80, cysteine 41/cysteine 57, cysteine 58/cysteine 102, and cysteine 78/cysteine 116.

The protein belongs to the plant LTP family.

Its function is as follows. Plant non-specific lipid-transfer proteins transfer phospholipids as well as galactolipids across membranes. May play a role in wax or cutin deposition in the cell walls of expanding epidermal cells and certain secretory tissues. The chain is Non-specific lipid-transfer protein 9 (LTP9) from Arabidopsis thaliana (Mouse-ear cress).